A 409-amino-acid chain; its full sequence is Na(+)/H(+) antiporter NhaA 2 (409 aa).

The next 12 membrane-spanning stretches (helical) occupy residues 10 to 30, 60 to 80, 89 to 109, 118 to 138, 148 to 168, 171 to 191, 203 to 223, 224 to 244, 257 to 277, 283 to 303, 328 to 348, and 356 to 376; these read VAAGLLLLAAVVGLVVANTPA, GLLVVFFFIVAVELKHEFLAG, LVPAIAAVGGVVVPALVYLAI, GWPVPTATDIAFALGVLAVFG, FLLALAVLDDLIAIGIIAVFF, GLDLGALAIAVAGVVLFAVVG, IAVVALLVLVALVTWWATLSS, GIHATIAGVALGFALPRLSGL, IVLPLFAFSAALVAIPAIGLA, FWGIALALPLGKLVGITAGGL, LLGGIGFTVSLLMSELAFAGL, and TLAVLLGSGVAIVAAAVTLSI. Residues 384–409 are disordered; the sequence is AGAAADDDDATRDDFPAHADGGPARA.

The protein belongs to the NhaA Na(+)/H(+) (TC 2.A.33) antiporter family.

Its subcellular location is the cell membrane. The enzyme catalyses Na(+)(in) + 2 H(+)(out) = Na(+)(out) + 2 H(+)(in). Functionally, na(+)/H(+) antiporter that extrudes sodium in exchange for external protons. This chain is Na(+)/H(+) antiporter NhaA 2, found in Clavibacter michiganensis subsp. michiganensis (strain NCPPB 382).